A 428-amino-acid chain; its full sequence is GTPase Obg (428 aa).

Residues 1 to 158 (MFVDQVKIYV…RDVILELKVL (158 aa)) form the Obg domain. The 171-residue stretch at 159-329 (ADVGLVGFPS…LLFEVANLLE (171 aa)) folds into the OBG-type G domain. Residues 165–172 (GFPSVGKS), 190–194 (FTTIV), 212–215 (DLPG), 282–285 (NKMD), and 310–312 (SAV) each bind GTP. 2 residues coordinate Mg(2+): Ser-172 and Thr-192. Residues 350–428 (KLETEGVKFD…ILEYEFEFID (79 aa)) form the OCT domain.

The protein belongs to the TRAFAC class OBG-HflX-like GTPase superfamily. OBG GTPase family. In terms of assembly, monomer. Mg(2+) is required as a cofactor.

The protein resides in the cytoplasm. Functionally, an essential GTPase which binds GTP, GDP and possibly (p)ppGpp with moderate affinity, with high nucleotide exchange rates and a fairly low GTP hydrolysis rate. Plays a role in control of the cell cycle, stress response, ribosome biogenesis and in those bacteria that undergo differentiation, in morphogenesis control. This chain is GTPase Obg, found in Bacillus cereus (strain Q1).